The primary structure comprises 264 residues: [LysW]-aminoadipate/[LysW]-glutamate kinase (264 aa).

Substrate is bound by residues 35 to 36 (GG), Arg62, and Asn167.

Belongs to the acetylglutamate kinase family. LysZ subfamily.

The protein localises to the cytoplasm. It carries out the reaction [amino-group carrier protein]-C-terminal-N-(1,4-dicarboxybutan-1-yl)-L-glutamine + ATP = [amino-group carrier protein]-C-terminal-N-(1-carboxy-5-phosphooxy-5-oxopentan-1-yl)-L-glutamine + ADP. It catalyses the reaction [amino-group carrier protein]-C-terminal-gamma-(L-glutamyl)-L-glutamate + ATP = [amino-group carrier protein]-C-terminal-gamma-(5-phospho-L-glutamyl)-L-glutamate + ADP. The protein operates within amino-acid biosynthesis; L-lysine biosynthesis via AAA pathway; L-lysine from L-alpha-aminoadipate (Thermus route): step 2/5. Its pathway is amino-acid biosynthesis; L-arginine biosynthesis. In terms of biological role, involved in both the arginine and lysine biosynthetic pathways. Phosphorylates the LysW-bound precursors glutamate (for arginine biosynthesis), respectively alpha-aminoadipate (for lysine biosynthesis). The protein is [LysW]-aminoadipate/[LysW]-glutamate kinase of Saccharolobus islandicus (strain Y.N.15.51 / Yellowstone #2) (Sulfolobus islandicus).